A 221-amino-acid polypeptide reads, in one-letter code: uncharacterized protein (221 aa).

This is an uncharacterized protein from Shigella flexneri.